Reading from the N-terminus, the 69-residue chain is Large ribosomal subunit protein uL29 (69 aa).

This sequence belongs to the universal ribosomal protein uL29 family.

The chain is Large ribosomal subunit protein uL29 from Carboxydothermus hydrogenoformans (strain ATCC BAA-161 / DSM 6008 / Z-2901).